The following is a 310-amino-acid chain: Fe-S cluster assembly protein dre2 (310 aa).

Disordered stretches follow at residues 1–30 (MAPS…GKRT) and 165–184 (APAP…DDND). Residues 24–154 (ADSGKRTLLL…KMDVGNGAAV (131 aa)) form an N-terminal SAM-like domain region. Residues 155-202 (PLRLGRKKKAAPAPAPVVQPPPIISSDDNDLNDDELIDEDTLLSADDL) form a linker region. The span at 167 to 177 (APAPVVQPPPI) shows a compositional bias: pro residues. C212, C223, C226, and C228 together coordinate [2Fe-2S] cluster. The interval 212–228 (CQPKAGKRRRACKDCTC) is fe-S binding site A. [4Fe-4S] cluster contacts are provided by C273, C276, C284, and C287. 2 consecutive short sequence motifs (cx2C motif) follow at residues 273 to 276 (CGNC) and 284 to 287 (CDGC). Residues 273–287 (CGNCALGDAFRCDGC) form a fe-S binding site B region.

The protein belongs to the anamorsin family. Monomer. Interacts with tah18. Interacts with mia40. [2Fe-2S] cluster is required as a cofactor. It depends on [4Fe-4S] cluster as a cofactor.

The protein resides in the cytoplasm. Its subcellular location is the mitochondrion intermembrane space. Component of the cytosolic iron-sulfur (Fe-S) protein assembly (CIA) machinery required for the maturation of extramitochondrial Fe-S proteins. Part of an electron transfer chain functioning in an early step of cytosolic Fe-S biogenesis, facilitating the de novo assembly of a [4Fe-4S] cluster on the scaffold complex cfd1-nbp35. Electrons are transferred to dre2 from NADPH via the FAD- and FMN-containing protein tah18. Tah18-dre2 are also required for the assembly of the diferric tyrosyl radical cofactor of ribonucleotide reductase (RNR), probably by providing electrons for reduction during radical cofactor maturation in the catalytic small subunit rnr2. The sequence is that of Fe-S cluster assembly protein dre2 from Emericella nidulans (strain FGSC A4 / ATCC 38163 / CBS 112.46 / NRRL 194 / M139) (Aspergillus nidulans).